Consider the following 268-residue polypeptide: Mitochondrial distribution and morphology protein 12 (268 aa).

The SMP-LTD domain occupies 1–266 (MSIDLEWCKL…FPNFHTIVMA (266 aa)). Residues 66-136 (EDDEEGSDRG…PPPAENPHPN (71 aa)) are disordered. Over residues 102 to 111 (PATNVTSSLD) the composition is skewed to polar residues. Positions 112 to 121 (TRSDQPDDQK) are enriched in basic and acidic residues.

This sequence belongs to the MDM12 family. In terms of assembly, component of the ER-mitochondria encounter structure (ERMES) or MDM complex, composed of MMM1, MDM10, MDM12 and MDM34. An MMM1 homodimer associates with one molecule of MDM12 on each side in a pairwise head-to-tail manner, and the SMP-LTD domains of MMM1 and MDM12 generate a continuous hydrophobic tunnel for phospholipid trafficking.

Its subcellular location is the mitochondrion outer membrane. It is found in the endoplasmic reticulum membrane. Its function is as follows. Component of the ERMES/MDM complex, which serves as a molecular tether to connect the endoplasmic reticulum (ER) and mitochondria. Components of this complex are involved in the control of mitochondrial shape and protein biogenesis, and function in nonvesicular lipid trafficking between the ER and mitochondria. MDM12 is required for the interaction of the ER-resident membrane protein MMM1 and the outer mitochondrial membrane-resident beta-barrel protein MDM10. The MDM12-MMM1 subcomplex functions in the major beta-barrel assembly pathway that is responsible for biogenesis of all mitochondrial outer membrane beta-barrel proteins, and acts in a late step after the SAM complex. The MDM10-MDM12-MMM1 subcomplex further acts in the TOM40-specific pathway after the action of the MDM12-MMM1 complex. Essential for establishing and maintaining the structure of mitochondria and maintenance of mtDNA nucleoids. This Laccaria bicolor (strain S238N-H82 / ATCC MYA-4686) (Bicoloured deceiver) protein is Mitochondrial distribution and morphology protein 12.